The chain runs to 827 residues: Glycerol-3-phosphate acyltransferase (827 aa).

The HXXXXD motif motif lies at 325 to 330 (CHRSHM).

Belongs to the GPAT/DAPAT family.

It localises to the cell inner membrane. The enzyme catalyses sn-glycerol 3-phosphate + an acyl-CoA = a 1-acyl-sn-glycero-3-phosphate + CoA. It participates in phospholipid metabolism; CDP-diacylglycerol biosynthesis; CDP-diacylglycerol from sn-glycerol 3-phosphate: step 1/3. The polypeptide is Glycerol-3-phosphate acyltransferase (Shigella boydii serotype 4 (strain Sb227)).